A 350-amino-acid chain; its full sequence is C-X-C chemokine receptor type 1 (350 aa).

Over 1-39 the chain is Extracellular; that stretch reads MSNITDPQMWDFDDLNFTGMPPADEDYSPCMLETETLNK. 2 N-linked (GlcNAc...) asparagine glycosylation sites follow: Asn3 and Asn16. The helical transmembrane segment at 40–66 threads the bilayer; the sequence is YVVIIAYALVFLLSLLGNSLVMLVILY. Topologically, residues 67–75 are cytoplasmic; that stretch reads SRVGRSVTD. The chain crosses the membrane as a helical span at residues 76–96; it reads VYLLNLALADLLFALTLPIWA. Topologically, residues 97–111 are extracellular; sequence ASKVNGWIFGTFLCK. Cys110 and Cys187 are oxidised to a cystine. Residues 112–133 traverse the membrane as a helical segment; that stretch reads VVSLLKEVNFYSGILLLACISV. The Cytoplasmic segment spans residues 134–154; sequence DRYLAIVHATRTLTQKRHLVK. The helical transmembrane segment at 155 to 174 threads the bilayer; sequence FVCLGCWGLSMNLSLPFFLF. The Extracellular segment spans residues 175 to 199; the sequence is RQAYHPNNSSPVCYEVLGNDTAKWR. Residues 200 to 220 form a helical membrane-spanning segment; it reads MVLRILPHTFGFIVPLFVMLF. The Cytoplasmic portion of the chain corresponds to 221–242; that stretch reads CYGFTLRTLFKAHMGQKHRAMR. The chain crosses the membrane as a helical span at residues 243-264; sequence VIFAVVLIFLLCWLPYNLVLLA. The Extracellular portion of the chain corresponds to 265-285; the sequence is DTLMRTQVIQESCERRNNIGR. Residues 286 to 308 form a helical membrane-spanning segment; the sequence is ALDATEILGFLHSCLNPIIYAFI. At 309 to 350 the chain is on the cytoplasmic side; sequence GQNFRHGFLKILAMHGLVSKEFLARHRVTSYTSSSVNVSSNL.

This sequence belongs to the G-protein coupled receptor 1 family. In terms of assembly, interacts with IL8. Interacts with GNAI2.

The protein resides in the cell membrane. In terms of biological role, receptor to interleukin-8, which is a powerful neutrophils chemotactic factor. Binding of IL-8 to the receptor causes activation of neutrophils. This response is mediated via a G-protein that activates a phosphatidylinositol-calcium second messenger system. This Homo sapiens (Human) protein is C-X-C chemokine receptor type 1 (CXCR1).